The primary structure comprises 520 residues: Bifunctional dihydrofolate reductase-thymidylate synthase (520 aa).

Residues 26-229 form the DHFR domain; the sequence is AFSIVVALDK…LEFEICKYVP (204 aa). Substrate is bound at residue V30. NADP(+) contacts are provided by residues A32 and 38 to 44; that span reads GIGDGES. D52 is a binding site for substrate. NADP(+) is bound by residues 81-83, 102-105, and 157-164; these read RKT, LSSK, and GGAQVYAD. Positions 162 and 180 each coordinate substrate. The thymidylate synthase stretch occupies residues 234–520; the sequence is ERQYLELIDR…HPPIKMEMAV (287 aa). R254 lines the dUMP pocket. Residue C400 is part of the active site. DUMP is bound by residues H401, 421 to 425, N433, and 463 to 465; these read QRSCD and HVY.

The protein in the N-terminal section; belongs to the dihydrofolate reductase family. This sequence in the C-terminal section; belongs to the thymidylate synthase family.

The catalysed reaction is (6S)-5,6,7,8-tetrahydrofolate + NADP(+) = 7,8-dihydrofolate + NADPH + H(+). It carries out the reaction dUMP + (6R)-5,10-methylene-5,6,7,8-tetrahydrofolate = 7,8-dihydrofolate + dTMP. The protein operates within cofactor biosynthesis; tetrahydrofolate biosynthesis; 5,6,7,8-tetrahydrofolate from 7,8-dihydrofolate: step 1/1. In terms of biological role, bifunctional enzyme. Involved in de novo dTMP biosynthesis. Key enzyme in folate metabolism. Catalyzes an essential reaction for de novo glycine and purine synthesis, DNA precursor synthesis, and for the conversion of dUMP to dTMP. This chain is Bifunctional dihydrofolate reductase-thymidylate synthase, found in Leishmania amazonensis.